A 740-amino-acid chain; its full sequence is Homeobox protein 4 (740 aa).

The span at 1-13 shows a compositional bias: polar residues; sequence MNTVEENNTKITD. Disordered regions lie at residues 1–41 and 179–491; these read MNTV…ENLS and NNNN…NNEI. 4 stretches are compositionally biased toward low complexity: residues 14–34, 179–241, 251–288, and 303–316; these read NNNN…NNKN, NNNN…PQQN, NNNN…NNNN, and STTD…SVPS. Positions 254 to 287 form a coiled coil; that stretch reads NINNNNINKNNNNYNNNNNNKNNNNNNNNNNNNN. Residues 317-328 are compositionally biased toward basic residues; that stretch reads NKKKSSKTKQKS. Polar residues predominate over residues 339–363; sequence HKSNYHQQPNQNSQHLQSKPNSPIL. Composition is skewed to low complexity over residues 365-390 and 397-491; these read SSPL…SPPQ and NNNF…NNEI. A coiled-coil region spans residues 472–500; the sequence is NTNTNNNNNKNNNNNNNNEIENNNNEELI. The homeobox DNA-binding region spans 605-667; the sequence is RPKKGAKLSK…NTRRRKVPTL (63 aa). Low complexity predominate over residues 686–722; it reads NNNNNNGGNSNFKNNNNNTITTTSTSNNNNNNNNNNH. The segment at 686–740 is disordered; that stretch reads NNNNNNGGNSNFKNNNNNTITTTSTSNNNNNNNNNNHNEMECDDGENEESSEYDD. Residues 726-740 show a composition bias toward acidic residues; the sequence is ECDDGENEESSEYDD.

The protein resides in the nucleus. Putative transcription factor. This is Homeobox protein 4 (hbx4) from Dictyostelium discoideum (Social amoeba).